The sequence spans 512 residues: Ribonuclease Y (512 aa).

Residues 2 to 22 (VGMYIIIPIVTFIIGGLLAWL) form a helical membrane-spanning segment. A KH domain is found at 202 to 262 (SITVFHIESD…VRREIARLAL (61 aa)). The 94-residue stretch at 328–421 (LLQHARETAN…VQVCDAISGA (94 aa)) folds into the HD domain.

It belongs to the RNase Y family.

It is found in the cell membrane. Endoribonuclease that initiates mRNA decay. This is Ribonuclease Y from Parabacteroides distasonis (strain ATCC 8503 / DSM 20701 / CIP 104284 / JCM 5825 / NCTC 11152).